Reading from the N-terminus, the 358-residue chain is CRS2-associated factor 2, mitochondrial (358 aa).

The transit peptide at 1–28 (MLSIRRSLTLAKEPKDLFLFLCNLRARC) directs the protein to the mitochondrion. Positions 35–64 (DPPFSPLSKPTKPPKEKKKQKTKKQDQSSE) are disordered. CRM domains are found at residues 141–239 (ETLT…SRPI) and 261–357 (DGLE…ELVT).

As to quaternary structure, part of large ribonucleo-protein complexes that include group IIB introns.

The protein resides in the mitochondrion. Functionally, may be involved in the splicing of group IIB introns in mitochondria. The sequence is that of CRS2-associated factor 2, mitochondrial from Arabidopsis thaliana (Mouse-ear cress).